Reading from the N-terminus, the 156-residue chain is Ribosomal RNA large subunit methyltransferase H (156 aa).

Residues Leu73, Gly104, and 123–128 (LSALTL) contribute to the S-adenosyl-L-methionine site.

The protein belongs to the RNA methyltransferase RlmH family. In terms of assembly, homodimer.

It is found in the cytoplasm. The enzyme catalyses pseudouridine(1915) in 23S rRNA + S-adenosyl-L-methionine = N(3)-methylpseudouridine(1915) in 23S rRNA + S-adenosyl-L-homocysteine + H(+). Its function is as follows. Specifically methylates the pseudouridine at position 1915 (m3Psi1915) in 23S rRNA. In Shewanella sp. (strain MR-7), this protein is Ribosomal RNA large subunit methyltransferase H.